A 98-amino-acid polypeptide reads, in one-letter code: Cytochrome c2 (98 aa).

Position 1 is a pyrrolidone carboxylic acid (Gln1). Heme c is bound by residues Cys10, Cys13, His14, and Met76.

The protein belongs to the cytochrome c family. Post-translationally, binds 1 heme c group covalently per subunit.

Its subcellular location is the periplasm. Its function is as follows. Cytochrome c2 is found mainly in purple, non-sulfur, photosynthetic bacteria where it functions as the electron donor to the oxidized bacteriochlorophyll in the photophosphorylation pathway. However, it may also have a role in the respiratory chain and is found in some non-photosynthetic bacteria. This is Cytochrome c2 from Rhodoplanes tepidamans (Rhodoplanes cryptolactis).